Reading from the N-terminus, the 429-residue chain is Proton/sodium-glutamate symport protein (429 aa).

At 1 to 5 (MKRIK) the chain is on the cytoplasmic side. The chain crosses the membrane as a helical span at residues 6–26 (FGLATQIFVGLILGVIVGVIW). Topologically, residues 27 to 45 (YGNPALPTYLQPIGDLFLR) are extracellular. A helical transmembrane segment spans residues 46–66 (LIKMIVIPIVVSSLIIGVAGA). Residues 67-79 (GNGKQVGKLGFRT) lie on the Cytoplasmic side of the membrane. The chain crosses the membrane as a helical span at residues 80–100 (ILYFEIITTFAIILGLALANI). Topologically, residues 101–150 (FHPGTGVNIHEAQKSDISQYVETEKEQSNKSVAETFLHIVPTNFFQSLVE) are extracellular. A helical transmembrane segment spans residues 151-171 (GDLLAIICFTVLFALGISAIG). The Cytoplasmic portion of the chain corresponds to 172–190 (ERGKPVLAFFEGVSHAMFH). The chain crosses the membrane as a helical span at residues 191–211 (VVNLVMKVAPFGVFALIGVTV). At 212–224 (SKFGLGSLISLGK) the chain is on the extracellular side. Residues 225 to 245 (LVGLVYVALAFFLIVIFGIVA) traverse the membrane as a helical segment. Position 246 (lysine 246) is a topological domain, cytoplasmic. The helical transmembrane segment at 247–267 (IAGISIFKFLAYMKDEILLAF) threads the bilayer. Residues 268–290 (STSSSETVLPRIMEKMEKIGCPK) lie on the Extracellular side of the membrane. A helical transmembrane segment spans residues 291 to 311 (GIVSFVIPIGYTFNLDGSVLY). At 312–321 (QSIAALFLAQ) the chain is on the cytoplasmic side. The helical transmembrane segment at 322–342 (VYGIDLTIWHQITLVLVLMVT) threads the bilayer. Topologically, residues 343–353 (SKGMAAVPGTS) are extracellular. Residues 354–374 (FVVLLATLGTIGVPAEGLAFI) traverse the membrane as a helical segment. Residues 375 to 429 (AGVDRIMDMARTVVNLTGNALAAVVMSKWEGMFNPAKAETVMSQSKTEQNATISG) lie on the Cytoplasmic side of the membrane.

This sequence belongs to the dicarboxylate/amino acid:cation symporter (DAACS) (TC 2.A.23) family. As to quaternary structure, homotrimer. Interacts with FloT.

Its subcellular location is the cell membrane. It localises to the membrane raft. This carrier protein is part of the Na(+)-dependent, binding-protein-independent glutamate-aspartate transport system. This Bacillus subtilis (strain 168) protein is Proton/sodium-glutamate symport protein (gltT).